The chain runs to 410 residues: Sporulation killing factor maturation protein SkfB (410 aa).

Residues 103–314 (SYLPISCTLQ…LREARHKWGD (212 aa)) form the Radical SAM core domain. [4Fe-4S] cluster is bound by residues Cys117, Cys121, Cys124, Cys380, Cys385, and Cys387.

The protein belongs to the radical SAM superfamily. [4Fe-4S] cluster serves as cofactor.

It is found in the cytoplasm. Its function is as follows. Catalyzes the formation of the thioether bond required for production of the sporulation killing factor (SKF) from SkfA. Forms the cysteine-methionine thioether bond found in SKF; the acceptor amino acid can be hydrophobic, aromatic or a small hydrophilic amino acid but not a larger hydrophilic amino acid, i.e. Met=Ala, Phe, Leu, Tyr&gt;Asn, Ser&gt;&gt;Gln, Glu, Lys. The relative position of Cys and Met in the substrate cannot be inverted, in vitro the thioether bond cannot be made in the absence of the SkfA propeptide, suggesting this is the first reaction in SKF maturation. In vitro, in the absence of a second substrate, cleaves S-adenosyl-L-methionine into Met and 5'-dA. This chain is Sporulation killing factor maturation protein SkfB, found in Bacillus subtilis (strain 168).